A 312-amino-acid polypeptide reads, in one-letter code: Dehydrin CAS31 (312 aa).

Disordered regions lie at residues 1–88 and 248–287; these read MSQY…HTGG and GTEQ…HHGE. The segment covering 21–30 has biased composition (polar residues); that stretch reads PLTSQGQVDQ. Residues 35–46 show a composition bias toward gly residues; it reads ISGGGMTGATGH. Over residues 55-66 the composition is skewed to low complexity; sequence HGVGVDQTTGFG. Composition is skewed to gly residues over residues 67–88 and 256–278; these read SNTG…HTGG and TGTG…GTTG.

Belongs to the plant dehydrin family. Interacts with the leghemoglobin LB120-1 in the cytoplasm; this interaction leads to LB120-1 protection from denaturation under thermal and drought stresses. Expressed in nodules and roots.

It localises to the cytoplasm. In terms of biological role, intrinsically disordered protein acting as a chaperone. Ensures leghemoglobins (e.g. LB120-1) protection from denaturation under thermal and drought stresses to delay root nodule nitrogenase inactivation and subsequent nodule senescence, thus supporting symbiotic nitrogen fixation (SNF). In Medicago truncatula (Barrel medic), this protein is Dehydrin CAS31.